A 256-amino-acid polypeptide reads, in one-letter code: Small ribosomal subunit protein uS3 (256 aa).

The region spanning 39 to 111 (IREFLNENFS…EVILNIIEVR (73 aa)) is the KH type-2 domain. Residues 219–256 (DTRKPFEAGNQKRGQKRRPRNDQPGQRPQQRNRNSKED) form a disordered region. Positions 240–250 (DQPGQRPQQRN) are enriched in low complexity.

This sequence belongs to the universal ribosomal protein uS3 family. In terms of assembly, part of the 30S ribosomal subunit. Forms a tight complex with proteins S10 and S14.

In terms of biological role, binds the lower part of the 30S subunit head. Binds mRNA in the 70S ribosome, positioning it for translation. This Acholeplasma laidlawii (strain PG-8A) protein is Small ribosomal subunit protein uS3.